Reading from the N-terminus, the 334-residue chain is Heat shock factor 2-binding protein (334 aa).

The interaction with BRME1 stretch occupies residues 14-51; it reads MGTKEEFVKVRKKDLERLTTEVMQIRDFLPRILNGEVL. A coiled-coil region spans residues 49-122; sequence EVLESFQKLK…LLQQAEYCTE (74 aa). The segment at 83-334 is interaction with BRCA2; that stretch reads ARLETVQADN…EDLRTLEHNV (252 aa).

In terms of assembly, associates with HSF2. The interaction seems to occur between the trimerization domain of HSF2 and the N-terminal hydrophilic region of HSF2BP. Interacts (via C-terminus) with BNC1. Interacts (via N-terminus) with BRCA2 and BRME1; the interactions are direct and allow the formation of a ternary complex. The complex BRME1:HSF2BP:BRCA2 interacts with SPATA22, MEIOB and RAD51. Sumoylated by UBE2I in response to MEKK1-mediated stimuli. As to expression, testis specific. Overexpressed in some tumors.

It localises to the cytoplasm. Its subcellular location is the chromosome. Its function is as follows. Meiotic recombination factor component of recombination bridges involved in meiotic double-strand break repair. Modulates the localization of recombinases DMC1:RAD51 to meiotic double-strand break (DSB) sites through the interaction with BRCA2 and its recruitment during meiotic recombination. Indispensable for the DSB repair, homologous synapsis, and crossover formation that are needed for progression past metaphase I, is essential for spermatogenesis and male fertility. Required for proper recombinase recruitment in female meiosis. Inhibits BNC1 transcriptional activity during spermatogenesis, probably by sequestering it in the cytoplasm. May be involved in modulating HSF2 activation in testis. This is Heat shock factor 2-binding protein from Homo sapiens (Human).